We begin with the raw amino-acid sequence, 349 residues long: Protein RAE1 (349 aa).

The tract at residues 1–21 (MATFGAPATANSNPNKSYEVT) is disordered. A2 bears the N-acetylalanine mark. Positions 9 to 21 (TANSNPNKSYEVT) are enriched in polar residues. 5 WD repeats span residues 23 to 62 (SPADSISSLSFSPRADILVATSWDNQVRCWEISRSGASLA), 70 to 109 (SHDQPVLCSAWKDDGTTVFSGGCDKQAKMWPLLSGGQPVT), 112 to 151 (MHEGPIAAMAWIPGMNLLATGSWDKTLKYWDTRQQNPVHT), 153 to 190 (QLPDKCYTLSVKHPLMVVGTADRNLIVFNLQNPQTEFK), and 244 to 283 (NDIYSVNSLNFHPVHGTFATAGSDGAFNFWDKDSKQRLKA). Positions 128 to 144 (LLATGSWDKTLKYWDTR) match the DWD box motif.

It belongs to the WD repeat rae1 family. In terms of assembly, part of the nuclear pore complex (NPC). The NPC has an eight-fold symmetrical structure comprising a central transport channel and two rings, the cytoplasmic and nuclear rings, to which eight filaments are attached. The cytoplasmic filaments have loose ends, while the nuclear filaments are joined in a distal ring, forming a nuclear basket. NPCs are highly dynamic in configuration and composition, and can be devided in 3 subcomplexes, the NUP62 subcomplex, the NUP107-160 subcomplex and the NUP93 subcomplex, containing approximately 30 different nucleoporin proteins. Interacts with DDB1A.

Its subcellular location is the nucleus envelope. The protein resides in the nucleus. It localises to the nuclear pore complex. In Arabidopsis thaliana (Mouse-ear cress), this protein is Protein RAE1.